A 502-amino-acid chain; its full sequence is ATP synthase subunit alpha (502 aa).

ATP is bound at residue 169-176; the sequence is GDRQTGKT.

The protein belongs to the ATPase alpha/beta chains family. F-type ATPases have 2 components, CF(1) - the catalytic core - and CF(0) - the membrane proton channel. CF(1) has five subunits: alpha(3), beta(3), gamma(1), delta(1), epsilon(1). CF(0) has three main subunits: a(1), b(2) and c(9-12). The alpha and beta chains form an alternating ring which encloses part of the gamma chain. CF(1) is attached to CF(0) by a central stalk formed by the gamma and epsilon chains, while a peripheral stalk is formed by the delta and b chains.

The protein localises to the cell inner membrane. The enzyme catalyses ATP + H2O + 4 H(+)(in) = ADP + phosphate + 5 H(+)(out). In terms of biological role, produces ATP from ADP in the presence of a proton gradient across the membrane. The alpha chain is a regulatory subunit. In Solidesulfovibrio magneticus (strain ATCC 700980 / DSM 13731 / RS-1) (Desulfovibrio magneticus), this protein is ATP synthase subunit alpha.